The following is a 630-amino-acid chain: Biosynthetic arginine decarboxylase (630 aa).

K99 carries the N6-(pyridoxal phosphate)lysine modification. 281 to 291 contacts substrate; sequence VDIGGGLGVDY.

It belongs to the Orn/Lys/Arg decarboxylase class-II family. SpeA subfamily. It depends on Mg(2+) as a cofactor. Pyridoxal 5'-phosphate is required as a cofactor.

The catalysed reaction is L-arginine + H(+) = agmatine + CO2. It participates in amine and polyamine biosynthesis; agmatine biosynthesis; agmatine from L-arginine: step 1/1. In terms of biological role, catalyzes the biosynthesis of agmatine from arginine. This is Biosynthetic arginine decarboxylase from Bacteroides fragilis (strain ATCC 25285 / DSM 2151 / CCUG 4856 / JCM 11019 / LMG 10263 / NCTC 9343 / Onslow / VPI 2553 / EN-2).